Reading from the N-terminus, the 133-residue chain is Phosphoribosyl-AMP cyclohydrolase (133 aa).

Residue D77 coordinates Mg(2+). Residue C78 participates in Zn(2+) binding. Residues D79 and D81 each contribute to the Mg(2+) site. Residues C95 and C102 each contribute to the Zn(2+) site.

It belongs to the PRA-CH family. In terms of assembly, homodimer. Requires Mg(2+) as cofactor. Zn(2+) is required as a cofactor.

The protein localises to the cytoplasm. It catalyses the reaction 1-(5-phospho-beta-D-ribosyl)-5'-AMP + H2O = 1-(5-phospho-beta-D-ribosyl)-5-[(5-phospho-beta-D-ribosylamino)methylideneamino]imidazole-4-carboxamide. Its pathway is amino-acid biosynthesis; L-histidine biosynthesis; L-histidine from 5-phospho-alpha-D-ribose 1-diphosphate: step 3/9. In terms of biological role, catalyzes the hydrolysis of the adenine ring of phosphoribosyl-AMP. This chain is Phosphoribosyl-AMP cyclohydrolase, found in Pseudomonas fluorescens (strain Pf0-1).